The following is a 433-amino-acid chain: Voltage-gated potassium channel regulatory subunit KCNG3 (433 aa).

Residues 1 to 165 (MTFGRGGAAS…RTFEEPTSSL (165 aa)) lie on the Cytoplasmic side of the membrane. The chain crosses the membrane as a helical span at residues 166–187 (AAQILASVSVVFVIVSMVVLCA). Over 188-217 (STLPDWRAAVADNRSLDDRSRYSASPGREP) the chain is Extracellular. The chain crosses the membrane as a helical span at residues 218-239 (SGIIEAICIGWFTAECIVRFIV). Over 240–250 (SKNKCEFVKRP) the chain is Cytoplasmic. A helical membrane pass occupies residues 251 to 271 (LNIIDLLAITPYYISVLMTVF). Over 272 to 281 (TGENSQLQRA) the chain is Extracellular. The chain crosses the membrane as a helical; Voltage-sensor span at residues 282 to 302 (GVTLRVLRMMRIFWVIKLARH). Residues 303–317 (FIGLQTLGLTLKRCY) are Cytoplasmic-facing. A helical transmembrane segment spans residues 318-339 (REMAMLLVFICVAMAIFSALSQ). Residues 340–357 (LLEHGLDLETSNKDFASI) lie on the Extracellular side of the membrane. The helical intramembrane region spans 358–369 (PAACWWVIISMT). Positions 370–375 (TVGYGD) match the Selectivity filter motif. The stretch at 370–377 (TVGYGDMY) is an intramembrane region. Topologically, residues 378–384 (PITVPGR) are extracellular. The helical transmembrane segment at 385 to 413 (ILGGVCVVSGIVLLALPITFIYHSFVQCY) threads the bilayer. The Cytoplasmic portion of the chain corresponds to 414-433 (HELKFRSARYSRSLSAEFLN).

The protein belongs to the potassium channel family. G (TC 1.A.1.2) subfamily. Kv6.3/KCNG3 sub-subfamily. As to quaternary structure, heterotetramer with KCNB1. Does not form homomultimers.

The protein resides in the cell membrane. It localises to the cytoplasm. Regulatory subunit of the voltage-gated potassium (Kv) channel which, when coassembled with KCNB1, modulates the kinetics parameters of the heterotetrameric channel namely the inactivation and deactivation rate. Potassium channel subunit that does not form functional channels by itself. Reduces the deactivation rate. Moderately acceleratee activation. In Mus musculus (Mouse), this protein is Voltage-gated potassium channel regulatory subunit KCNG3.